The chain runs to 878 residues: Microtubule-associated protein homolog maph-1.1 (878 aa).

2 disordered regions span residues 224-425 (ALSD…AQAT) and 456-518 (EIPP…PVVP). 4 stretches are compositionally biased toward low complexity: residues 241–268 (PSARPATTTGTATRPTRPAVPAASAPRA), 278–293 (SRPTTTRNAAPAPRTA), 310–321 (APTRAPVPARSA), and 328–339 (APAKPAANTAKA). Basic and acidic residues-rich tracts occupy residues 416–425 (PPRHEVAQAT) and 480–496 (EEDKIPEPVDAFKKPDP).

Belongs to the MAP1A/MAP1B/MAP1S family. As to quaternary structure, interacts with dlg-1.

It localises to the cell projection. The protein resides in the dendrite. The protein localises to the perikaryon. Its subcellular location is the axon. It is found in the cytoplasm. It localises to the cytoskeleton. The polypeptide is Microtubule-associated protein homolog maph-1.1 (Caenorhabditis elegans).